Here is a 410-residue protein sequence, read N- to C-terminus: BTB and MATH domain-containing protein 42 (410 aa).

The span at 1 to 19 (MSSRSSWSSTEQINRTISS) shows a compositional bias: polar residues. The interval 1–29 (MSSRSSWSSTEQINRTISSRADDLPPQPR) is disordered. Residues 45-173 (STKLEWKIEQ…DGTLFLICEV (129 aa)) form the MATH domain. The BTB domain maps to 219 to 287 (TDCVIHVGNK…MYTGATESLE (69 aa)). The tract at residues 389–410 (TSNIPISVSPPPARKRLRRSAK) is disordered. Residues 401–410 (ARKRLRRSAK) show a composition bias toward basic residues.

In terms of assembly, interacts with cul-3.

It functions in the pathway protein modification; protein ubiquitination. Functionally, probable substrate-specific adapter of an E3 ubiquitin-protein ligase complex which mediates the ubiquitination and subsequent proteasomal degradation of target proteins. The sequence is that of BTB and MATH domain-containing protein 42 (bath-42) from Caenorhabditis elegans.